The sequence spans 1509 residues: Dynein axonemal assembly factor 1 homolog (1509 aa).

LRR repeat units lie at residues R34 to T56, E57 to S78, K79 to R100, E101 to I122, V125 to V146, and T150 to E171. Residues P185–W223 form the LRRCT domain. Disordered regions lie at residues C252–C280, H306–S327, S962–N1008, and T1103–N1122. Low complexity predominate over residues S309 to S318. Positions S978 to Y990 are enriched in acidic residues. The segment covering T1103 to G1112 has biased composition (polar residues).

The protein belongs to the DNAAF1 family.

Its subcellular location is the cell projection. The protein resides in the cilium. In terms of biological role, cilium-specific protein required for cilia structures. The protein is Dynein axonemal assembly factor 1 homolog (dtr) of Drosophila yakuba (Fruit fly).